A 101-amino-acid chain; its full sequence is Small ribosomal subunit protein uS14 (101 aa).

The protein belongs to the universal ribosomal protein uS14 family. As to quaternary structure, part of the 30S ribosomal subunit. Contacts proteins S3 and S10.

Its function is as follows. Binds 16S rRNA, required for the assembly of 30S particles and may also be responsible for determining the conformation of the 16S rRNA at the A site. In Chelativorans sp. (strain BNC1), this protein is Small ribosomal subunit protein uS14.